We begin with the raw amino-acid sequence, 360 residues long: Peptide chain release factor 1 (360 aa).

Position 235 is an N5-methylglutamine (glutamine 235). A disordered region spans residues 285–314 (KRQQAEASTRRNLLGSGDRSDRNRTYNFPQ).

This sequence belongs to the prokaryotic/mitochondrial release factor family. Methylated by PrmC. Methylation increases the termination efficiency of RF1.

It localises to the cytoplasm. In terms of biological role, peptide chain release factor 1 directs the termination of translation in response to the peptide chain termination codons UAG and UAA. In Klebsiella pneumoniae subsp. pneumoniae (strain ATCC 700721 / MGH 78578), this protein is Peptide chain release factor 1.